We begin with the raw amino-acid sequence, 148 residues long: Putative HTH-type transcriptional regulator NMA1593 (148 aa).

The region spanning 2-131 (RLTTKGRFAV…GSVTLQSIIE (130 aa)) is the HTH rrf2-type domain.

In Neisseria meningitidis serogroup A / serotype 4A (strain DSM 15465 / Z2491), this protein is Putative HTH-type transcriptional regulator NMA1593.